The chain runs to 211 residues: Endonuclease III (211 aa).

The HhH domain occupies 111–130 (AHALESLPGVGHKTANVVLN). [4Fe-4S] cluster contacts are provided by cysteine 190, cysteine 197, cysteine 200, and cysteine 206.

Belongs to the Nth/MutY family. [4Fe-4S] cluster is required as a cofactor.

The catalysed reaction is 2'-deoxyribonucleotide-(2'-deoxyribose 5'-phosphate)-2'-deoxyribonucleotide-DNA = a 3'-end 2'-deoxyribonucleotide-(2,3-dehydro-2,3-deoxyribose 5'-phosphate)-DNA + a 5'-end 5'-phospho-2'-deoxyribonucleoside-DNA + H(+). DNA repair enzyme that has both DNA N-glycosylase activity and AP-lyase activity. The DNA N-glycosylase activity releases various damaged pyrimidines from DNA by cleaving the N-glycosidic bond, leaving an AP (apurinic/apyrimidinic) site. The AP-lyase activity cleaves the phosphodiester bond 3' to the AP site by a beta-elimination, leaving a 3'-terminal unsaturated sugar and a product with a terminal 5'-phosphate. This is Endonuclease III from Treponema pallidum (strain Nichols).